The chain runs to 213 residues: Imidazoleglycerol-phosphate dehydratase (213 aa).

The protein belongs to the imidazoleglycerol-phosphate dehydratase family.

The protein localises to the cytoplasm. The catalysed reaction is D-erythro-1-(imidazol-4-yl)glycerol 3-phosphate = 3-(imidazol-4-yl)-2-oxopropyl phosphate + H2O. It functions in the pathway amino-acid biosynthesis; L-histidine biosynthesis; L-histidine from 5-phospho-alpha-D-ribose 1-diphosphate: step 6/9. This Trichodesmium erythraeum (strain IMS101) protein is Imidazoleglycerol-phosphate dehydratase.